The following is a 361-amino-acid chain: Phosphoserine aminotransferase (361 aa).

Arg-42 provides a ligand contact to L-glutamate. Pyridoxal 5'-phosphate-binding positions include 76–77 (AR), Trp-102, Thr-153, Asp-173, and Gln-196. Lys-197 bears the N6-(pyridoxal phosphate)lysine mark. Position 238–239 (238–239 (NT)) interacts with pyridoxal 5'-phosphate.

The protein belongs to the class-V pyridoxal-phosphate-dependent aminotransferase family. SerC subfamily. Homodimer. Pyridoxal 5'-phosphate is required as a cofactor.

It is found in the cytoplasm. The enzyme catalyses O-phospho-L-serine + 2-oxoglutarate = 3-phosphooxypyruvate + L-glutamate. It carries out the reaction 4-(phosphooxy)-L-threonine + 2-oxoglutarate = (R)-3-hydroxy-2-oxo-4-phosphooxybutanoate + L-glutamate. Its pathway is amino-acid biosynthesis; L-serine biosynthesis; L-serine from 3-phospho-D-glycerate: step 2/3. It participates in cofactor biosynthesis; pyridoxine 5'-phosphate biosynthesis; pyridoxine 5'-phosphate from D-erythrose 4-phosphate: step 3/5. Its function is as follows. Catalyzes the reversible conversion of 3-phosphohydroxypyruvate to phosphoserine and of 3-hydroxy-2-oxo-4-phosphonooxybutanoate to phosphohydroxythreonine. The protein is Phosphoserine aminotransferase of Pectobacterium atrosepticum (strain SCRI 1043 / ATCC BAA-672) (Erwinia carotovora subsp. atroseptica).